Consider the following 274-residue polypeptide: tRNA pseudouridine synthase A (274 aa).

Aspartate 57 functions as the Nucleophile in the catalytic mechanism. Tyrosine 115 is a substrate binding site.

It belongs to the tRNA pseudouridine synthase TruA family. In terms of assembly, homodimer.

The catalysed reaction is uridine(38/39/40) in tRNA = pseudouridine(38/39/40) in tRNA. Its function is as follows. Formation of pseudouridine at positions 38, 39 and 40 in the anticodon stem and loop of transfer RNAs. In Frankia casuarinae (strain DSM 45818 / CECT 9043 / HFP020203 / CcI3), this protein is tRNA pseudouridine synthase A.